Reading from the N-terminus, the 210-residue chain is Syntaxin-binding protein 6 (210 aa).

Position 2 is an N-acetylserine (Ser2). One can recognise a v-SNARE coiled-coil homology domain in the interval 151–210 (GNSILHSAADSVTSAVQKASQALNERGERLGRAEEKTEDLKNSAQQFAETAHKLAMKHKC).

As to quaternary structure, part of a ternary complex containing SNAP25 and STX1A that can be dissociated by NAPA and NSF. Interacts with STX4A.

It localises to the cytoplasm. The protein localises to the membrane. Functionally, forms non-fusogenic complexes with SNAP25 and STX1A and may thereby modulate the formation of functional SNARE complexes and exocytosis. This Bos taurus (Bovine) protein is Syntaxin-binding protein 6 (STXBP6).